The primary structure comprises 90 residues: Large ribosomal subunit protein bL31 (90 aa).

Residues 71-90 (KVKKFPSNADNQKEPAEEQE) form a disordered region. A compositionally biased stretch (basic and acidic residues) spans 81–90 (NQKEPAEEQE).

It belongs to the bacterial ribosomal protein bL31 family. Type A subfamily. In terms of assembly, part of the 50S ribosomal subunit.

In terms of biological role, binds the 23S rRNA. This chain is Large ribosomal subunit protein bL31 (rpmE), found in Aster yellows witches'-broom phytoplasma (strain AYWB).